Consider the following 351-residue polypeptide: UDP-3-O-acylglucosamine N-acyltransferase (351 aa).

The active-site Proton acceptor is H240.

This sequence belongs to the transferase hexapeptide repeat family. LpxD subfamily. As to quaternary structure, homotrimer.

The catalysed reaction is a UDP-3-O-[(3R)-3-hydroxyacyl]-alpha-D-glucosamine + a (3R)-hydroxyacyl-[ACP] = a UDP-2-N,3-O-bis[(3R)-3-hydroxyacyl]-alpha-D-glucosamine + holo-[ACP] + H(+). The protein operates within bacterial outer membrane biogenesis; LPS lipid A biosynthesis. In terms of biological role, catalyzes the N-acylation of UDP-3-O-acylglucosamine using 3-hydroxyacyl-ACP as the acyl donor. Is involved in the biosynthesis of lipid A, a phosphorylated glycolipid that anchors the lipopolysaccharide to the outer membrane of the cell. In Pseudomonas syringae pv. tomato (strain ATCC BAA-871 / DC3000), this protein is UDP-3-O-acylglucosamine N-acyltransferase.